Consider the following 109-residue polypeptide: Spermidine export protein MdtI (109 aa).

A run of 4 helical transmembrane segments spans residues 6 to 26, 36 to 56, 64 to 84, and 88 to 108; these read FYPI…NILL, WLGI…AQAV, AYAL…WILF, and LNYK…MIKL.

Belongs to the drug/metabolite transporter (DMT) superfamily. Small multidrug resistance (SMR) (TC 2.A.7.1) family. MdtI subfamily. As to quaternary structure, forms a complex with MdtJ.

It is found in the cell inner membrane. Its function is as follows. Catalyzes the excretion of spermidine. The polypeptide is Spermidine export protein MdtI (Yersinia pseudotuberculosis serotype O:1b (strain IP 31758)).